Reading from the N-terminus, the 295-residue chain is Bifunctional protein FolD (295 aa).

Residues 166-168 (GRS), Ser-195, and Ile-236 each bind NADP(+).

Belongs to the tetrahydrofolate dehydrogenase/cyclohydrolase family. As to quaternary structure, homodimer.

The enzyme catalyses (6R)-5,10-methylene-5,6,7,8-tetrahydrofolate + NADP(+) = (6R)-5,10-methenyltetrahydrofolate + NADPH. It carries out the reaction (6R)-5,10-methenyltetrahydrofolate + H2O = (6R)-10-formyltetrahydrofolate + H(+). The protein operates within one-carbon metabolism; tetrahydrofolate interconversion. In terms of biological role, catalyzes the oxidation of 5,10-methylenetetrahydrofolate to 5,10-methenyltetrahydrofolate and then the hydrolysis of 5,10-methenyltetrahydrofolate to 10-formyltetrahydrofolate. The polypeptide is Bifunctional protein FolD (Pelodictyon phaeoclathratiforme (strain DSM 5477 / BU-1)).